We begin with the raw amino-acid sequence, 227 residues long: Bone marrow proteoglycan (227 aa).

A signal peptide spans 1-16 (MKFPLLLALLVGGAFA). Residues 17-110 (LHLSSEASDS…TSLMGDSGFK (94 aa)) constitute a propeptide, acidic. The interval 21–105 (SEASDSKSPL…KEEDTTSLMG (85 aa)) is disordered. Ser-24 carries an O-linked (GalNAc...) serine glycan. Residues 34 to 46 (SLPREAEISRPEV) are compositionally biased toward basic and acidic residues. Acidic residues predominate over residues 58 to 70 (LEEEEEEEEEEGS). O-linked (Xyl...) (chondroitin sulfate) serine glycosylation is present at Ser-70. Residues 128 to 227 (LVCRSCYRGT…GKRRPFICAY (100 aa)) enclose the C-type lectin domain. Disulfide bonds link Cys-130–Cys-225 and Cys-202–Cys-217.

In terms of processing, nitrated.

The protein localises to the secreted. Its function is as follows. Cytotoxin and helminthotoxin. MBP also induces non-cytolytic histamine release from basophils. It is involved in antiparasitic defense mechanisms and immune hypersensitivity reactions. This Rattus norvegicus (Rat) protein is Bone marrow proteoglycan (Prg2).